A 193-amino-acid chain; its full sequence is Peptidyl-tRNA hydrolase (193 aa).

TRNA is bound at residue Tyr-21. His-26 (proton acceptor) is an active-site residue. 3 residues coordinate tRNA: Tyr-72, Asn-74, and Asn-120.

It belongs to the PTH family. In terms of assembly, monomer.

The protein resides in the cytoplasm. The catalysed reaction is an N-acyl-L-alpha-aminoacyl-tRNA + H2O = an N-acyl-L-amino acid + a tRNA + H(+). Hydrolyzes ribosome-free peptidyl-tRNAs (with 1 or more amino acids incorporated), which drop off the ribosome during protein synthesis, or as a result of ribosome stalling. In terms of biological role, catalyzes the release of premature peptidyl moieties from peptidyl-tRNA molecules trapped in stalled 50S ribosomal subunits, and thus maintains levels of free tRNAs and 50S ribosomes. In Nocardia farcinica (strain IFM 10152), this protein is Peptidyl-tRNA hydrolase.